A 350-amino-acid chain; its full sequence is Probable sugar phosphate/phosphate translocator At4g32390 (350 aa).

The next 10 helical transmembrane spans lie at isoleucine 15 to tyrosine 35, phenylalanine 49 to isoleucine 69, valine 89 to tyrosine 109, valine 112 to leucine 132, methionine 146 to tryptophan 166, valine 168 to leucine 188, valine 205 to leucine 225, phenylalanine 235 to leucine 255, threonine 263 to isoleucine 283, and threonine 286 to asparagine 306. The 118-residue stretch at tyrosine 38–isoleucine 155 folds into the EamA domain. Residues glutamine 324–aspartate 350 form a disordered region.

This sequence belongs to the TPT transporter family. TPT (TC 2.A.7.9) subfamily.

It localises to the membrane. The polypeptide is Probable sugar phosphate/phosphate translocator At4g32390 (Arabidopsis thaliana (Mouse-ear cress)).